We begin with the raw amino-acid sequence, 410 residues long: Voltage-dependent chloride channel 1, chloroplastic (410 aa).

Over 1 to 110 (MYQSMNLSVS…RHLLSSFSSR (110 aa)) the chain is Lumenal, thylakoid. Residues 111–131 (VILSLIPPVFFFTSVAVVIAS) traverse the membrane as a helical segment. Over 132-147 (YNSAVALDWLPGIFPI) the chain is Stromal. The chain crosses the membrane as a helical span at residues 148–168 (LRSSSLPYQLTAPALALLLVF). At 169 to 315 (RTEASYSRYE…PLSYTRLTSR (147 aa)) the chain is on the lumenal, thylakoid side. 2 consecutive transmembrane segments (helical) span residues 316–336 (FLVFWHLTLPIILWDECHWIV) and 337–357 (VPATFISAASLFCIEEVGVLI). Residues 358 to 410 (EEPFPMLALDELCDLVHSNIQEAVKSEKVIRNRIIAKIKLHEFKHSSNGRHRS) are Lumenal, thylakoid-facing.

The protein belongs to the anion channel-forming bestrophin (TC 1.A.46) family. Voltage-dependent chloride channel subfamily. As to expression, mostly expressed in flowers and leaves and, to a lower extent, in stems and roots.

It localises to the plastid. Its subcellular location is the chloroplast thylakoid membrane. It carries out the reaction chloride(in) = chloride(out). With respect to regulation, more active at positive than at negative voltages. Repressed by the general anion channel inhibitors dithiocyanatostilbene-2,20-disulphonic acid (DIDS) and niflumic acid. Its function is as follows. Voltage-dependent chloride (Cl) channel critical for proton motive force (PMF) partitioning across the thylakoid membrane by anion influx into the lumen during illumination, thus being required for photoprotection under fluctuating light conditions. Influences thylakoid ultrastructure, including lumen size and organization. During photosynthetic response on transition from dark to low light, involved in a sequential mechanism of adaptation; VCCN1 and CLCe first trigger the activation of photoprotection, which is later down-regulated by KEA3 to a low steady state, while adjusting electron transport. On transition from low to high light, accelerates the activation of photoprotection by building up a pH gradient across the thylakoid membrane. The polypeptide is Voltage-dependent chloride channel 1, chloroplastic (Arabidopsis thaliana (Mouse-ear cress)).